We begin with the raw amino-acid sequence, 283 residues long: MCNTPTYCDLGKAAKDVFNKGYGFGMVKIDLRTKSCSGVEFSTSGHAYTDTGKASGNLETKYKICNYGLTFTQKWNTDNTLGTEISWENKLAEGLKLTLDTIFVPNTGKKSGKLKASYKRDCFSLGSNVDIDFSGPTIYGWAVLAFEGWLAGYQMSFDTAKSKLSQNNFALGYKAADFQLHTHVNDGTEFGGSIYQKVNEKIETSINLAWTAGSNNTRFGIAAKYKLDCRTSLSAKVNNASLIGLGYTQTLRPGVKLTLSALIDGKNFNAGGHKVGLGFELEA.

Residue C2 is modified to N-acetylcysteine. T4 bears the Phosphothreonine mark. 3 positions are modified to N6-acetyllysine: K12, K15, and K20. Transmembrane regions (beta stranded) follow at residues 26 to 35 (MVKIDLRTKS) and 39 to 47 (VEFSTSGHA). A Glycyl lysine isopeptide (Lys-Gly) (interchain with G-Cter in ubiquitin) cross-link involves residue K53. Beta stranded transmembrane passes span 54-64 (ASGNLETKYKI), 69-76 (LTFTQKWN), and 80-89 (TLGTEISWEN). An N6-acetyllysine modification is found at K90. Residues 95–104 (LKLTLDTIFV) traverse the membrane as a beta stranded segment. Residues K109 and K110 each participate in a glycyl lysine isopeptide (Lys-Gly) (interchain with G-Cter in ubiquitin) cross-link. Beta stranded transmembrane passes span 111–120 (SGKLKASYKR), 123–130 (FSLGSNVD), 137–145 (TIYGWAVLA), 150–158 (LAGYQMSFD), 163–175 (KLSQ…GYKA), 178–185 (FQLHTHVN), 189–198 (EFGGSIYQKV), 202–211 (IETSINLAWT), 218–227 (RFGIAAKYKL), and 231–238 (TSLSAKVN). A Phosphoserine modification is found at S241. Residues 242 to 244 (LIG) and 260 to 264 (SALID) each bind NAD(+). A run of 2 beta stranded transmembrane segments spans residues 242 to 251 (LIGLGYTQTL) and 254 to 263 (GVKLTLSALI). Residue K266 is modified to N6-acetyllysine; alternate. Residue K266 forms a Glycyl lysine isopeptide (Lys-Gly) (interchain with G-Cter in ubiquitin); alternate linkage. A beta stranded membrane pass occupies residues 273 to 282 (HKVGLGFELE).

It belongs to the eukaryotic mitochondrial porin family. Interacts with ARMC12 in a TBC1D21-dependent manner. Interacts with MISFA. Post-translationally, ubiquitinated by PRKN during mitophagy, leading to its degradation and enhancement of mitophagy. Deubiquitinated by USP30.

The protein resides in the mitochondrion outer membrane. Its subcellular location is the membrane. The enzyme catalyses chloride(in) = chloride(out). It carries out the reaction K(+)(in) = K(+)(out). Non-selective voltage-gated ion channel that mediates the transport of anions and cations through the mitochondrion outer membrane and plasma membrane. Forms a high-conducting channel with a stable open state and a voltage-induced closure with a mild preference for anions over cations. Involved in male fertility and sperm mitochondrial sheath formation. This chain is Non-selective voltage-gated ion channel VDAC3, found in Bos taurus (Bovine).